The chain runs to 348 residues: Protein RecA (348 aa).

Residue Gly-67 to Thr-74 participates in ATP binding.

The protein belongs to the RecA family.

It localises to the cytoplasm. Its function is as follows. Can catalyze the hydrolysis of ATP in the presence of single-stranded DNA, the ATP-dependent uptake of single-stranded DNA by duplex DNA, and the ATP-dependent hybridization of homologous single-stranded DNAs. It interacts with LexA causing its activation and leading to its autocatalytic cleavage. In Amycolatopsis mediterranei (strain U-32), this protein is Protein RecA.